The chain runs to 269 residues: Formamidopyrimidine-DNA glycosylase (269 aa).

The active-site Schiff-base intermediate with DNA is Pro2. The active-site Proton donor is Glu3. Lys57 serves as the catalytic Proton donor; for beta-elimination activity. The DNA site is built by His90, Arg109, and Lys150. An FPG-type zinc finger spans residues 235–269; the sequence is QVYGRKGEPCRVCGTPIVATKHAQRATFYCRHCQK. Arg259 (proton donor; for delta-elimination activity) is an active-site residue.

It belongs to the FPG family. As to quaternary structure, monomer. Zn(2+) is required as a cofactor.

The enzyme catalyses Hydrolysis of DNA containing ring-opened 7-methylguanine residues, releasing 2,6-diamino-4-hydroxy-5-(N-methyl)formamidopyrimidine.. It catalyses the reaction 2'-deoxyribonucleotide-(2'-deoxyribose 5'-phosphate)-2'-deoxyribonucleotide-DNA = a 3'-end 2'-deoxyribonucleotide-(2,3-dehydro-2,3-deoxyribose 5'-phosphate)-DNA + a 5'-end 5'-phospho-2'-deoxyribonucleoside-DNA + H(+). Functionally, involved in base excision repair of DNA damaged by oxidation or by mutagenic agents. Acts as a DNA glycosylase that recognizes and removes damaged bases. Has a preference for oxidized purines, such as 7,8-dihydro-8-oxoguanine (8-oxoG). Has AP (apurinic/apyrimidinic) lyase activity and introduces nicks in the DNA strand. Cleaves the DNA backbone by beta-delta elimination to generate a single-strand break at the site of the removed base with both 3'- and 5'-phosphates. This chain is Formamidopyrimidine-DNA glycosylase, found in Salmonella enteritidis PT4 (strain P125109).